Consider the following 113-residue polypeptide: Small ribosomal subunit protein bS6 (113 aa).

This sequence belongs to the bacterial ribosomal protein bS6 family.

In terms of biological role, binds together with bS18 to 16S ribosomal RNA. The protein is Small ribosomal subunit protein bS6 (rpsF) of Synechocystis sp. (strain ATCC 27184 / PCC 6803 / Kazusa).